We begin with the raw amino-acid sequence, 310 residues long: Olfactory receptor 8B8 (310 aa).

At 1–27 (MATENASVPEFILAGLTDQPGLRMPLF) the chain is on the extracellular side. N-linked (GlcNAc...) asparagine glycosylation occurs at N5. The chain crosses the membrane as a helical span at residues 28–48 (FLFLGFYMVTMVGNLGLITLI). Residues 49–55 (GLNSHLH) lie on the Cytoplasmic side of the membrane. Residues 56 to 76 (TPMYFFLFNLSLIDFCYSTVI) form a helical membrane-spanning segment. Topologically, residues 77–98 (TPKMLVSFVSKKNIISYSGCMT) are extracellular. A disulfide bridge connects residues C96 and C188. The chain crosses the membrane as a helical span at residues 99–119 (QLFFFLFFVVSESFILSAMAY). The Cytoplasmic portion of the chain corresponds to 120 to 140 (DRYVAICNPLMYTVTMSPQVC). Residues 141–161 (LLLLLGVYVMGFAGAMAHTAF) traverse the membrane as a helical segment. Topologically, residues 162 to 195 (MVKLTFCADKLVNHYMCDILPLLERSCTSTYVNE) are extracellular. Residues 196–216 (LVVFIVVGIDIGVPTVTIFIS) form a helical membrane-spanning segment. Residues 217–238 (YALILSSILRISSTEGRSKAFS) lie on the Cytoplasmic side of the membrane. Residues 239-259 (TCSSHIIAVSLFFGSGAFMYL) form a helical membrane-spanning segment. Over 260 to 270 (KPSSLLPMNQG) the chain is Extracellular. The helical transmembrane segment at 271–291 (KVSSLFYTIVVPMLNPLIYSL) threads the bilayer. Topologically, residues 292 to 310 (RNKDVKVALRKTLSRSSFS) are cytoplasmic.

It belongs to the G-protein coupled receptor 1 family.

It is found in the cell membrane. Its function is as follows. Odorant receptor. The sequence is that of Olfactory receptor 8B8 from Mus musculus (Mouse).